The sequence spans 367 residues: Anhydro-N-acetylmuramic acid kinase (367 aa).

13-20 (GTSMDGAD) is an ATP binding site.

The protein belongs to the anhydro-N-acetylmuramic acid kinase family.

It carries out the reaction 1,6-anhydro-N-acetyl-beta-muramate + ATP + H2O = N-acetyl-D-muramate 6-phosphate + ADP + H(+). Its pathway is amino-sugar metabolism; 1,6-anhydro-N-acetylmuramate degradation. It participates in cell wall biogenesis; peptidoglycan recycling. In terms of biological role, catalyzes the specific phosphorylation of 1,6-anhydro-N-acetylmuramic acid (anhMurNAc) with the simultaneous cleavage of the 1,6-anhydro ring, generating MurNAc-6-P. Is required for the utilization of anhMurNAc either imported from the medium or derived from its own cell wall murein, and thus plays a role in cell wall recycling. The sequence is that of Anhydro-N-acetylmuramic acid kinase from Neisseria meningitidis serogroup B (strain ATCC BAA-335 / MC58).